Here is a 447-residue protein sequence, read N- to C-terminus: Hemogen (447 aa).

The tract at residues Met1 to Leu91 is disordered. The necessary for nuclear localization stretch occupies residues Gln7–Glu86. Composition is skewed to basic and acidic residues over residues Gln14–Val25 and Arg35–Glu49. A compositionally biased stretch (basic residues) spans Glu59 to Gln78. Phosphoserine occurs at positions 89 and 122. Residues Gln137 to Asn156 form a disordered region. Ser200 is subject to Phosphoserine. Disordered stretches follow at residues Ala210 to Pro280 and Ala306 to Glu337. Thr217 is subject to Phosphothreonine. Basic and acidic residues predominate over residues Ala306 to Thr316.

The protein localises to the nucleus. In terms of biological role, regulates the proliferation and differentiation of hematopoietic cells. Overexpression block the TPA-induced megakaryocytic differentiation in the K562 cell model. May also prevent cell apoptosis through the activation of the nuclear factor-kappa B (NF-kB). The protein is Hemogen (HEMGN) of Bos taurus (Bovine).